Here is a 415-residue protein sequence, read N- to C-terminus: Diaminopimelate decarboxylase (415 aa).

N6-(pyridoxal phosphate)lysine is present on Lys-54. Residues Gly-223 and 264 to 267 (EPGR) each bind pyridoxal 5'-phosphate. Residues Arg-267, Arg-303, and Tyr-307 each contribute to the substrate site. Catalysis depends on Cys-338, which acts as the Proton donor. Substrate contacts are provided by Glu-339 and Tyr-374. Tyr-374 contributes to the pyridoxal 5'-phosphate binding site.

The protein belongs to the Orn/Lys/Arg decarboxylase class-II family. LysA subfamily. As to quaternary structure, homodimer. The cofactor is pyridoxal 5'-phosphate.

It carries out the reaction meso-2,6-diaminopimelate + H(+) = L-lysine + CO2. Its pathway is amino-acid biosynthesis; L-lysine biosynthesis via DAP pathway; L-lysine from DL-2,6-diaminopimelate: step 1/1. Specifically catalyzes the decarboxylation of meso-diaminopimelate (meso-DAP) to L-lysine. In Buchnera aphidicola subsp. Acyrthosiphon pisum (strain APS) (Acyrthosiphon pisum symbiotic bacterium), this protein is Diaminopimelate decarboxylase.